A 158-amino-acid chain; its full sequence is Cyclic pyranopterin monophosphate synthase (158 aa).

Substrate is bound by residues 73–75 (LCH) and 110–111 (ME). Asp125 is an active-site residue.

The protein belongs to the MoaC family. Homohexamer; trimer of dimers.

The enzyme catalyses (8S)-3',8-cyclo-7,8-dihydroguanosine 5'-triphosphate = cyclic pyranopterin phosphate + diphosphate. The protein operates within cofactor biosynthesis; molybdopterin biosynthesis. Functionally, catalyzes the conversion of (8S)-3',8-cyclo-7,8-dihydroguanosine 5'-triphosphate to cyclic pyranopterin monophosphate (cPMP). The chain is Cyclic pyranopterin monophosphate synthase from Ectopseudomonas mendocina (strain ymp) (Pseudomonas mendocina).